We begin with the raw amino-acid sequence, 123 residues long: Histone H2B (123 aa).

The disordered stretch occupies residues 1 to 31 (MPPKVASKGAKKAASKAKAARSGEKKKKRRR). The segment covering 9 to 31 (GAKKAASKAKAARSGEKKKKRRR) has biased composition (basic residues). A glycan (O-linked (GlcNAc) serine) is linked at serine 110. Lysine 118 participates in a covalent cross-link: Glycyl lysine isopeptide (Lys-Gly) (interchain with G-Cter in ubiquitin).

This sequence belongs to the histone H2B family. As to quaternary structure, the nucleosome is a histone octamer containing two molecules each of H2A, H2B, H3 and H4 assembled in one H3-H4 heterotetramer and two H2A-H2B heterodimers. The octamer wraps approximately 147 bp of DNA. In terms of processing, monoubiquitination of Lys-118 gives a specific tag for epigenetic transcriptional activation and is also prerequisite for histone H3 'Lys-4' and 'Lys-79' methylation. Post-translationally, glcNAcylation at Ser-110 promotes monoubiquitination of Lys-118. It fluctuates in response to extracellular glucose, and associates with transcribed genes.

The protein localises to the nucleus. It is found in the chromosome. In terms of biological role, core component of nucleosome. Nucleosomes wrap and compact DNA into chromatin, limiting DNA accessibility to the cellular machineries which require DNA as a template. Histones thereby play a central role in transcription regulation, DNA repair, DNA replication and chromosomal stability. DNA accessibility is regulated via a complex set of post-translational modifications of histones, also called histone code, and nucleosome remodeling. In Platynereis dumerilii (Dumeril's clam worm), this protein is Histone H2B.